The sequence spans 265 residues: MNRITETFDRLAAKKEKALVGFVTAGDPAIETSEAIIRAMCEAGIDILELGVPFSDPTADGPVIQRSSQRALANGTNLQTVFDMTATLRKTFQGPIILFSYYNPIFRYGAENFYRDAKQAGADGVLVVDLPPEESAELTSCWKGDDFALIRLLAPTTPDGRIGAIAASASGFLYLVSMTGVTGSSGLDTTHIADLCAKVQRHTALPICVGFGVSTADDVAKIAQHADGVVIGSAFERLIEESIGKPDIAGILAERTREYKAATKM.

Active-site proton acceptor residues include Glu49 and Asp60.

Belongs to the TrpA family. In terms of assembly, tetramer of two alpha and two beta chains.

The catalysed reaction is (1S,2R)-1-C-(indol-3-yl)glycerol 3-phosphate + L-serine = D-glyceraldehyde 3-phosphate + L-tryptophan + H2O. It functions in the pathway amino-acid biosynthesis; L-tryptophan biosynthesis; L-tryptophan from chorismate: step 5/5. In terms of biological role, the alpha subunit is responsible for the aldol cleavage of indoleglycerol phosphate to indole and glyceraldehyde 3-phosphate. The sequence is that of Tryptophan synthase alpha chain from Desulfosudis oleivorans (strain DSM 6200 / JCM 39069 / Hxd3) (Desulfococcus oleovorans).